A 225-amino-acid chain; its full sequence is UPF0725 protein At5g63820 (225 aa).

It belongs to the UPF0725 (EMB2204) family.

In Arabidopsis thaliana (Mouse-ear cress), this protein is UPF0725 protein At5g63820.